The following is a 276-amino-acid chain: Syntaxin-12 (276 aa).

Serine 2 is modified (N-acetylserine). Over 2–248 (SYGPLDMYRN…RAAYYQKKSR (247 aa)) the chain is Cytoplasmic. Residues 33–131 (IQRISQATAQ…RRVSEKEKES (99 aa)) adopt a coiled-coil conformation. Phosphoserine occurs at positions 139, 142, 218, and 225. One can recognise a t-SNARE coiled-coil homology domain in the interval 178–240 (LELIKERETA…ERATEQLQRA (63 aa)). Residues 249–269 (KKMCILVLVLSVIILILGLII) form a helical; Anchor for type IV membrane protein membrane-spanning segment. The Vesicular portion of the chain corresponds to 270–276 (WLVYKTK).

The protein belongs to the syntaxin family. Interacts with NAPA and SNAP23. Identified in a complex containing STX6, STX12, VAMP4 and VTI1A. Associates with the BLOC-1 complex. Interacts with BLOC1S6. Interacts with GRIPAP1. Forms a complex with GRIP1, GRIA2 and NSG1; controls the intracellular fate of AMPAR and the endosomal sorting of the GRIA2 subunit toward recycling and membrane targeting. Interacts with NSG1. Interacts with TPC1. Interacts (via N-terminus) with VPS13B.

Its subcellular location is the endosome membrane. The protein localises to the golgi apparatus membrane. It is found in the endomembrane system. It localises to the early endosome membrane. The protein resides in the recycling endosome membrane. In terms of biological role, SNARE promoting fusion of transport vesicles with target membranes. Together with SNARE STX6, promotes movement of vesicles from endosomes to the cell membrane, and may therefore function in the endocytic recycling pathway. Through complex formation with GRIP1, GRIA2 and NSG1 controls the intracellular fate of AMPAR and the endosomal sorting of the GRIA2 subunit toward recycling and membrane targeting. This Homo sapiens (Human) protein is Syntaxin-12 (STX12).